Consider the following 217-residue polypeptide: Adenylate kinase (217 aa).

12–17 is a binding site for ATP; that stretch reads GAGKGS. The segment at 32–61 is NMP; sequence STGDMFRTHIKGSTPLGLEAKKYTDQGLLV. AMP contacts are provided by residues Thr-33, Arg-38, 59–61, 87–90, and Gln-94; these read LLV and GYPR. The tract at residues 128 to 165 is LID; it reads GRRTCPVCGAIYHVDNYPPKVAGICDNDGATLVQRKDD. Position 129 (Arg-129) interacts with ATP. Zn(2+) contacts are provided by Cys-132 and Cys-135. Residue 138 to 139 coordinates ATP; sequence IY. Residues Cys-152 and Asp-155 each coordinate Zn(2+). AMP is bound by residues Arg-162 and Arg-173. Gln-201 provides a ligand contact to ATP.

The protein belongs to the adenylate kinase family. As to quaternary structure, monomer.

It localises to the cytoplasm. It carries out the reaction AMP + ATP = 2 ADP. Its pathway is purine metabolism; AMP biosynthesis via salvage pathway; AMP from ADP: step 1/1. Functionally, catalyzes the reversible transfer of the terminal phosphate group between ATP and AMP. Plays an important role in cellular energy homeostasis and in adenine nucleotide metabolism. This chain is Adenylate kinase, found in Acholeplasma laidlawii (strain PG-8A).